Here is a 108-residue protein sequence, read N- to C-terminus: MAKNRSRRLRKKMHIDEFQELGFSVAWRFPEGTSEEQIDKTVDDFINEVIEPNKLAFDGSGYLAWEGLICMQEIGKCTEEHQAIVRKWLEERKLDEVRTSELFDVWWD.

It to H.influenzae HI_0341.

This is an uncharacterized protein from Escherichia coli (strain K12).